We begin with the raw amino-acid sequence, 193 residues long: Holliday junction branch migration complex subunit RuvA (193 aa).

The segment at 1–63 is domain I; that stretch reads MIGKLTGTVT…ENINKLYGFE (63 aa). The domain II stretch occupies residues 64–148; sequence CRKSQEVARM…GIASSTNVHI (85 aa). The flexible linker stretch occupies residues 149–150; the sequence is AS. The interval 150–193 is domain III; it reads SEAVSALVKLGFQHKPSHKVVMEIMTKRPAIEIAELITLALKML.

The protein belongs to the RuvA family. In terms of assembly, homotetramer. Forms an RuvA(8)-RuvB(12)-Holliday junction (HJ) complex. HJ DNA is sandwiched between 2 RuvA tetramers; dsDNA enters through RuvA and exits via RuvB. An RuvB hexamer assembles on each DNA strand where it exits the tetramer. Each RuvB hexamer is contacted by two RuvA subunits (via domain III) on 2 adjacent RuvB subunits; this complex drives branch migration. In the full resolvosome a probable DNA-RuvA(4)-RuvB(12)-RuvC(2) complex forms which resolves the HJ.

It is found in the cytoplasm. Its function is as follows. The RuvA-RuvB-RuvC complex processes Holliday junction (HJ) DNA during genetic recombination and DNA repair, while the RuvA-RuvB complex plays an important role in the rescue of blocked DNA replication forks via replication fork reversal (RFR). RuvA specifically binds to HJ cruciform DNA, conferring on it an open structure. The RuvB hexamer acts as an ATP-dependent pump, pulling dsDNA into and through the RuvAB complex. HJ branch migration allows RuvC to scan DNA until it finds its consensus sequence, where it cleaves and resolves the cruciform DNA. The sequence is that of Holliday junction branch migration complex subunit RuvA from Neorickettsia sennetsu (strain ATCC VR-367 / Miyayama) (Ehrlichia sennetsu).